A 933-amino-acid chain; its full sequence is MVDQPDSENLDHAVDALSKRYDPLGTECRWQKIWEEEGAFHPDPNDEGEPFSVVIPPPNVTGSLHMGHAFNTALIDTIVRFQRLQGKNVLCLPGTDHASIAVQTILEKQLKKEGLTRDELGRSAFLERAWAWKSESGGRIVEQLRRLGYSVDWKRERFTMDTRLSKAVSEAFVRLHQQGLIYRGEYLVNWCPASSSAVSDLEVETKEVDGYLWHFQYPLSKINDSNGIRFLEVATTRPETMLGDVAVAVNPSDSRYSNIVGQTLTLPFLGREIPVIADDHVDMDFGTGCVKVTPAHDPNDFAIGQRHNLRQITVMNKDGTMNAEAGPFEGLDRFEARKAVVKALEQKGLLTKVEPYRHSVPFSDRGKVPIEPLLSTQWFVRMEPMAERCRSHLGKDEPRFYPDRWAKVYRDWLTGIRDWCISRQLWWGHRIPAWFVVSETNNELTDDTPYIVALSEKDALLEAQKKYGTDAVLRQDEDVLDTWFSSGLWPFSTLGWPDKTNADLSRWYPTNTLVTGFDIIFFWVARMTMMAGAFTGKMPFADVYIHGLVRDEQNRKMSKSAGNGIDPLLLIDRYGTDALRFALVKEVAGAGQDIRIDYDRAKDTSATVEAARNFANKLWNATRFALINLGDTTFKETFDELEHNRLELSDQWILSKLSKVNNETAKRYKKYALGEAAKGLYEFAWNDFCDWYLELIKRRLNLGESPSEADLSNRKKSQIVMFKVLRELLVMMHPLMPHLTEELWHGVTGFSNKKLLALQSWPALDKDLIDEDLELSFSELFGAIRLVRNLRAEAGLKPSQRAPVRFVTKNQNLLNLLKKATQDIQALTRANKVEILHPREIFEESSGRSLAGVSGELEVLLPIEGLVDLQALRNRLQKDLSKAENELSILSKRLDNPSFVQKAPEKVIEECRLKLSDAEAQAELVRQRLLGLK.

The 'HIGH' region motif lies at 58 to 68 (PNVTGSLHMGH). The short motif at 556–560 (KMSKS) is the 'KMSKS' region element. Lys559 contacts ATP. Coiled-coil stretches lie at residues 807-833 (VTKN…ANKV) and 864-933 (EGLV…LGLK).

The protein belongs to the class-I aminoacyl-tRNA synthetase family. ValS type 1 subfamily. As to quaternary structure, monomer.

The protein localises to the cytoplasm. The enzyme catalyses tRNA(Val) + L-valine + ATP = L-valyl-tRNA(Val) + AMP + diphosphate. In terms of biological role, catalyzes the attachment of valine to tRNA(Val). As ValRS can inadvertently accommodate and process structurally similar amino acids such as threonine, to avoid such errors, it has a 'posttransfer' editing activity that hydrolyzes mischarged Thr-tRNA(Val) in a tRNA-dependent manner. This chain is Valine--tRNA ligase, found in Prochlorococcus marinus (strain SARG / CCMP1375 / SS120).